Here is a 415-residue protein sequence, read N- to C-terminus: uncharacterized protein (415 aa).

[4Fe-4S] cluster is bound by residues C66, C72, C75, and C149. Q249, F276, E296, and D344 together coordinate S-adenosyl-L-methionine. C370 serves as the catalytic Nucleophile.

The protein belongs to the class I-like SAM-binding methyltransferase superfamily. RNA M5U methyltransferase family.

This is an uncharacterized protein from Brucella melitensis biotype 1 (strain ATCC 23456 / CCUG 17765 / NCTC 10094 / 16M).